A 437-amino-acid chain; its full sequence is F-box only protein 9 (437 aa).

Residues 1–26 (MSAEAEEDCHSDADRVGDEGNESPAE) are disordered. An N-acetylalanine modification is found at Ser-2. Basic and acidic residues predominate over residues 8-26 (DCHSDADRVGDEGNESPAE). At His-10 the chain carries Phosphoserine. The TPR repeat unit spans residues 84-117 (ARELFLQAVEEEQNGALYEAIKFYRRAMQLVPDI). Ser-126 is modified (phosphoserine). Residues 175 to 226 (QTHISVLPMEVLMYIFRWVVSSDLDLRSLEQLSLVCRGFYICARDPEIWRLA) enclose the F-box domain.

Part of the SCF (SKP1-CUL1-F-box) E3 ubiquitin-protein ligase complex SCF(FBXO9) composed of CUL1, SKP1, RBX1 and FBXO9. Interacts with TTI1 and TELO2; when TTI1 and TELO2 are phosphorylated by CK2.

The protein resides in the cytoplasm. The protein operates within protein modification; protein ubiquitination. Substrate recognition component of a SCF (SKP1-CUL1-F-box protein) E3 ubiquitin-protein ligase complex which mediates the ubiquitination and subsequent proteasomal degradation of target proteins and plays a role in several biological processes such as cell cycle, cell proliferation, or maintenance of chromosome stability. Ubiquitinates mTORC1-bound TTI1 and TELO2 when they are phosphorylated by CK2 following growth factor deprivation, leading to their degradation. In contrast, does not mediate ubiquitination of TTI1 and TELO2 when they are part of the mTORC2 complex. As a consequence, mTORC1 is inactivated to restrain cell growth and protein translation, while mTORC2 is the activated due to the relief of feedback inhibition by mTORC1. Plays a role in maintaining epithelial cell survival by regulating the turn-over of chromatin modulator PRMT4 through ubiquitination and degradation by the proteasomal pathway. Also regulates PPARgamma stability by facilitating PPARgamma/PPARG ubiquitination and thereby plays a role in adipocyte differentiation. This is F-box only protein 9 (Fbxo9) from Mus musculus (Mouse).